An 86-amino-acid polypeptide reads, in one-letter code: Small ribosomal subunit protein bS18c (86 aa).

The protein belongs to the bacterial ribosomal protein bS18 family. In terms of assembly, part of the 30S ribosomal subunit.

Its subcellular location is the plastid. It localises to the chloroplast. The sequence is that of Small ribosomal subunit protein bS18c from Pseudotsuga menziesii (Douglas-fir).